A 221-amino-acid chain; its full sequence is PKHD-type hydroxylase PMN2A_0775 (221 aa).

In terms of domain architecture, Fe2OG dioxygenase spans 80–174 (LIHGVMFTQS…RHVCVGWIQS (95 aa)). Positions 98, 100, and 155 each coordinate Fe cation. Arg-165 is a binding site for 2-oxoglutarate.

The cofactor is Fe(2+). It depends on L-ascorbate as a cofactor.

In Prochlorococcus marinus (strain NATL2A), this protein is PKHD-type hydroxylase PMN2A_0775.